We begin with the raw amino-acid sequence, 293 residues long: Proline iminopeptidase (293 aa).

The region spanning 28-277 is the AB hydrolase-1 domain; that stretch reads PLVLLHGGPG…NCGHMSFVEK (250 aa). Catalysis depends on serine 105, which acts as the Nucleophile. Residue aspartate 244 is part of the active site. The active-site Proton donor is histidine 271.

Belongs to the peptidase S33 family.

Its subcellular location is the cell envelope. It carries out the reaction Release of N-terminal proline from a peptide.. Functionally, releases the N-terminal proline from various substrates. This Lactobacillus crispatus (strain ST1) protein is Proline iminopeptidase.